Consider the following 72-residue polypeptide: Teretoxin Tsu11.2 (72 aa).

Positions Met-1 to Pro-21 are cleaved as a signal peptide. A propeptide spanning residues Thr-22–Arg-30 is cleaved from the precursor.

It belongs to the teretoxin H (TH) superfamily. In terms of processing, contains 4 disulfide bonds. In terms of tissue distribution, expressed by the venom duct.

It localises to the secreted. In Terebra subulata (Chocolate spotted auger), this protein is Teretoxin Tsu11.2.